The following is a 159-amino-acid chain: SsrA-binding protein (159 aa).

Residues 138-159 form a disordered region; sequence KRDTLKDKDWQRQKERMMKHSV.

This sequence belongs to the SmpB family.

The protein localises to the cytoplasm. Required for rescue of stalled ribosomes mediated by trans-translation. Binds to transfer-messenger RNA (tmRNA), required for stable association of tmRNA with ribosomes. tmRNA and SmpB together mimic tRNA shape, replacing the anticodon stem-loop with SmpB. tmRNA is encoded by the ssrA gene; the 2 termini fold to resemble tRNA(Ala) and it encodes a 'tag peptide', a short internal open reading frame. During trans-translation Ala-aminoacylated tmRNA acts like a tRNA, entering the A-site of stalled ribosomes, displacing the stalled mRNA. The ribosome then switches to translate the ORF on the tmRNA; the nascent peptide is terminated with the 'tag peptide' encoded by the tmRNA and targeted for degradation. The ribosome is freed to recommence translation, which seems to be the essential function of trans-translation. The sequence is that of SsrA-binding protein from Alteromonas mediterranea (strain DSM 17117 / CIP 110805 / LMG 28347 / Deep ecotype).